The sequence spans 356 residues: Histidinol-phosphate aminotransferase (356 aa).

K214 bears the N6-(pyridoxal phosphate)lysine mark.

It belongs to the class-II pyridoxal-phosphate-dependent aminotransferase family. Histidinol-phosphate aminotransferase subfamily. Homodimer. Pyridoxal 5'-phosphate is required as a cofactor.

The catalysed reaction is L-histidinol phosphate + 2-oxoglutarate = 3-(imidazol-4-yl)-2-oxopropyl phosphate + L-glutamate. It functions in the pathway amino-acid biosynthesis; L-histidine biosynthesis; L-histidine from 5-phospho-alpha-D-ribose 1-diphosphate: step 7/9. The sequence is that of Histidinol-phosphate aminotransferase from Escherichia fergusonii (strain ATCC 35469 / DSM 13698 / CCUG 18766 / IAM 14443 / JCM 21226 / LMG 7866 / NBRC 102419 / NCTC 12128 / CDC 0568-73).